The sequence spans 1889 residues: Treslin (1889 aa).

S295, S599, S820, S861, S919, S934, S1002, S1027, and S1078 each carry phosphoserine. A compositionally biased stretch (low complexity) spans 812-832; sequence DSMSQESMSPPPSSSTHRSVS. Positions 812 to 836 are disordered; the sequence is DSMSQESMSPPPSSSTHRSVSAITE. The segment at 979–1063 is disordered; sequence RLLHRQIKGR…RENFPVQSIQ (85 aa). A compositionally biased stretch (polar residues) spans 1020–1050; sequence LSFSRTNSGSFYSVSQPKSRSVQRIHSSQQE. Disordered regions lie at residues 1098–1421, 1471–1508, 1520–1543, 1630–1714, 1730–1751, and 1841–1875; these read EIST…SQFS, LPGE…SSSE, GKQR…SPQT, SCTP…SLEQ, VCQL…ETSW, and QGRT…TLSR. Polar residues predominate over residues 1127-1179; sequence TAQTLLYTPERLQNSPTEMTSAEGTISEATIKTPSSHGYNSPFASKVTSQKTV. The residue at position 1134 (T1134) is a Phosphothreonine. The residue at position 1141 (S1141) is a Phosphoserine. The span at 1187-1197 shows a compositional bias: low complexity; that stretch reads SPPLTKLPSTP. The segment covering 1203 to 1219 has biased composition (polar residues); the sequence is QPPQCSSDCTWPHSVNS. The span at 1339–1351 shows a compositional bias: low complexity; the sequence is TSPSVTSSVSCPV. Positions 1373–1382 are enriched in basic residues; the sequence is KLRRSCRKKS. Residue S1406 is modified to Phosphoserine. Positions 1496-1508 are enriched in low complexity; that stretch reads LVPAPSSVSSSSE. Polar residues-rich tracts occupy residues 1525–1543 and 1652–1662; these read DAAQ…SPQT and WTPSPKQSGKT. Residues 1705 to 1714 show a composition bias toward basic and acidic residues; it reads PEGKERSLEQ.

This sequence belongs to the treslin family. In terms of assembly, interacts with TOPBP1 (via BRCT domains); interaction takes place in a CDK2-dependent manner. Component of the replisome complex composed of at least DONSON, MCM2, MCM7, PCNA and TICRR.

It localises to the nucleus. Functionally, regulator of DNA replication and S/M and G2/M checkpoints. Regulates the triggering of DNA replication initiation via its interaction with TOPBP1 by participating in CDK2-mediated loading of CDC45L onto replication origins. Required for the transition from pre-replication complex (pre-RC) to pre-initiation complex (pre-IC). Required to prevent mitotic entry after treatment with ionizing radiation. In Mus musculus (Mouse), this protein is Treslin (Ticrr).